We begin with the raw amino-acid sequence, 472 residues long: Glutamate synthase [NADPH] small chain (472 aa).

The 32-residue stretch at 38–69 (GQAKAQADRCLSCGNPYCEWKCPVHNYIPNWL) folds into the 4Fe-4S ferredoxin-type domain. Residues C47, C50, C55, and C59 each coordinate [4Fe-4S] cluster.

As to quaternary structure, aggregate of 4 catalytic active heterodimers, consisting of a large and a small subunit. The cofactor is [4Fe-4S] cluster.

It catalyses the reaction 2 L-glutamate + NADP(+) = L-glutamine + 2-oxoglutarate + NADPH + H(+). Its pathway is amino-acid biosynthesis; L-glutamate biosynthesis via GLT pathway; L-glutamate from 2-oxoglutarate and L-glutamine (NADP(+) route): step 1/1. It functions in the pathway energy metabolism; nitrogen metabolism. Functionally, catalyzes the conversion of L-glutamine and 2-oxoglutarate into two molecules of L-glutamate. The sequence is that of Glutamate synthase [NADPH] small chain (gltD) from Escherichia coli (strain K12).